The chain runs to 25 residues: Histone H1.1 (25 aa).

In terms of domain architecture, H15 spans 1–25 (MVSEAIAALKEREGSSEFAIGKKKE). Positions 1-25 (MVSEAIAALKEREGSSEFAIGKKKE) are disordered. Residues 9-25 (LKEREGSSEFAIGKKKE) are compositionally biased toward basic and acidic residues.

The protein localises to the nucleus. The protein resides in the chromosome. Functionally, histones H1 are necessary for the condensation of nucleosome chains into higher-order structures. The sequence is that of Histone H1.1 from Triticum aestivum (Wheat).